Consider the following 1770-residue polypeptide: NEDD4-binding protein 2 (1770 aa).

The disordered stretch occupies residues 1 to 40 (MPRRRKNLGGNPFRKTANPKEVVVSSVASREEPTTTLPSM). The 44-residue stretch at 46 to 89 (DQEELFTSISEIFSDLDPDVVYLMLSECDFKVENAMDCLLELSA) folds into the CUE domain. Coiled-coil stretches lie at residues 90 to 177 (TDTK…NDSS) and 218 to 259 (HSVL…IAGC). Positions 95–129 (EESSSQSFVASENQVGAAESKIMEKRPEEESEDSK) are disordered. A compositionally biased stretch (polar residues) spans 97 to 108 (SSSQSFVASENQ). Residues 115–129 (KIMEKRPEEESEDSK) are compositionally biased toward basic and acidic residues. 447-454 (GLPGSGKS) is an ATP binding site. Disordered regions lie at residues 712-756 (SKTD…GEIV), 795-822 (KTIGQRTKRNRKTEKTSSVQSDKKYNYP), 836-862 (DCVQQRGSPHESVEDGRKSQCDDASEP), and 890-913 (SLAQREHRSRMPKTGLSEPNLEIG). Residues 843–856 (SPHESVEDGRKSQC) are compositionally biased toward basic and acidic residues. Ser-906 is subject to Phosphoserine. Residue Thr-1210 is modified to Phosphothreonine. The tract at residues 1580 to 1606 (NENVTSHTGQKSKEKKPKKLKETEETP) is disordered. Positions 1691–1770 (LDLHGLHVDE…KPGCLKVMLK (80 aa)) constitute a Smr domain.

As to quaternary structure, binds NEDD4. Binds BCL3 and CREBBP. Ubiquitinated; this targets the protein for degradation by the proteasome.

It localises to the cytoplasm. Its function is as follows. Has 5'-polynucleotide kinase and nicking endonuclease activity. May play a role in DNA repair or recombination. The protein is NEDD4-binding protein 2 (N4BP2) of Homo sapiens (Human).